Consider the following 682-residue polypeptide: Potassium-transporting ATPase ATP-binding subunit (682 aa).

4 helical membrane passes run 34–54, 62–82, 219–239, and 254–274; these read PVMFIVWIGSLLTTCISIAMA, ALFSAAISGWLWITVLFANFA, IALTILLIALTIVFLLATATL, and VLVALLVCLIPTTIGGLLSAI. Residue Asp307 is the 4-aspartylphosphate intermediate of the active site. Residues Asp344, Glu348, 377 to 384, and Lys395 each bind ATP; that span reads FTAQSRMS. 2 residues coordinate Mg(2+): Asp518 and Asp522. The next 3 membrane-spanning stretches (helical) occupy residues 588–608, 616–636, and 656–676; these read FAIIPAAFAATYPQLNALNIM, AILSAVIFNALIIVFLIPLAL, and IYGLGGLLVPFIGIKVIDLLL.

It belongs to the cation transport ATPase (P-type) (TC 3.A.3) family. Type IA subfamily. In terms of assembly, the system is composed of three essential subunits: KdpA, KdpB and KdpC.

It is found in the cell inner membrane. The enzyme catalyses K(+)(out) + ATP + H2O = K(+)(in) + ADP + phosphate + H(+). Its function is as follows. Part of the high-affinity ATP-driven potassium transport (or Kdp) system, which catalyzes the hydrolysis of ATP coupled with the electrogenic transport of potassium into the cytoplasm. This subunit is responsible for energy coupling to the transport system and for the release of the potassium ions to the cytoplasm. The chain is Potassium-transporting ATPase ATP-binding subunit from Escherichia coli (strain K12 / MC4100 / BW2952).